We begin with the raw amino-acid sequence, 314 residues long: MTRSISISVLIISVLIMIYVITRTSISNAYPIFAQQGYENPREATGRIVCANCHLANKPVDIEVPQAVLPNTVFEAVVRIPYDMQLKQVLANGKRGGLNVGAVLILPEGFELAPPDRISPEMKEKMGNLSFQNYRPTKRNILVIGPVPGQKYSEIVFPILSPDPATKKEVHFLKYPIYVGGNRGRGQIYPDGSKSNNTVYNATGAGLVSKIVRKEKGGYEITIADASDGHQAVDIIPPGPELLVSEGEYIKLDQPLTSNPNVGGFGQGDAEIVLQDPLRVQGLLFFLASVILAQIFLVLKKKQFEKVQLAEMNF.

Positions 1-29 (MTRSISISVLIISVLIMIYVITRTSISNA) are cleaved as a signal peptide. Heme-binding residues include Tyr-30, Cys-50, Cys-53, and His-54. A helical membrane pass occupies residues 280 to 300 (VQGLLFFLASVILAQIFLVLK).

This sequence belongs to the cytochrome f family. The 4 large subunits of the cytochrome b6-f complex are cytochrome b6, subunit IV (17 kDa polypeptide, petD), cytochrome f and the Rieske protein, while the 4 small subunits are PetG, PetL, PetM and PetN. The complex functions as a dimer. It depends on heme as a cofactor.

It localises to the plastid. It is found in the chloroplast thylakoid membrane. Component of the cytochrome b6-f complex, which mediates electron transfer between photosystem II (PSII) and photosystem I (PSI), cyclic electron flow around PSI, and state transitions. The polypeptide is Cytochrome f (Illicium oligandrum (Star anise)).